The chain runs to 334 residues: Meso-diaminopimelate D-dehydrogenase (334 aa).

NADP(+) contacts are provided by residues Tyr-16–Leu-19, Thr-40–Arg-42, Cys-75–Ser-78, Gly-98–Asp-100, and Cys-127–Pro-131. Substrate-binding positions include Asp-100, Asp-130, Trp-154, Gln-160–Gly-161, Thr-179, Arg-205, His-255, and Asn-284.

The protein belongs to the diaminopimelate dehydrogenase family. In terms of assembly, homodimer.

The enzyme catalyses meso-2,6-diaminopimelate + NADP(+) + H2O = (S)-2-amino-6-oxoheptanedioate + NH4(+) + NADPH + H(+). The protein operates within amino-acid biosynthesis; L-lysine biosynthesis via DAP pathway; DL-2,6-diaminopimelate from (S)-tetrahydrodipicolinate: step 1/1. Catalyzes the reversible NADPH-dependent reductive amination of L-2-amino-6-oxopimelate, the acyclic form of L-tetrahydrodipicolinate, to generate the meso compound, D,L-2,6-diaminopimelate. Probably plays a role in lysine biosynthesis. Exhibits a high substrate specificity for meso-2,6-diaminopimelate (m-DAP), since the activity with L,L-2,6-diaminopimelate is less than 5% of the activity observed with m-DAP. Can use NAD(+) only very poorly since the activity observed in the presence of NAD(+) is about 0.3% of that with NADP(+). The sequence is that of Meso-diaminopimelate D-dehydrogenase (ddh) from Acetivibrio thermocellus (strain ATCC 27405 / DSM 1237 / JCM 9322 / NBRC 103400 / NCIMB 10682 / NRRL B-4536 / VPI 7372) (Clostridium thermocellum).